Reading from the N-terminus, the 96-residue chain is Putative pterin-4-alpha-carbinolamine dehydratase (96 aa).

It belongs to the pterin-4-alpha-carbinolamine dehydratase family.

The enzyme catalyses (4aS,6R)-4a-hydroxy-L-erythro-5,6,7,8-tetrahydrobiopterin = (6R)-L-erythro-6,7-dihydrobiopterin + H2O. The chain is Putative pterin-4-alpha-carbinolamine dehydratase from Prochlorococcus marinus (strain MIT 9515).